Here is a 321-residue protein sequence, read N- to C-terminus: MQNTNTLNWINKLIYLSISIPIFFLILVTTYPNSVEAYPVFAQQAYKSPREATGRIVCANCHLAKKTVDIEVPQAVLPNTVFEAVVKIPYDMQLKQVLANGKKGNLNVAAVLILPEGFELAPPDRISPDIKEKIGNLSFQSYSPDQKNILVVGPVPGKKYSEITFPILSPDPSINKQTNFLKYPIYVGGNRGRGQIYLDGSKSNNTIYSSSAEGQVVKIIRKEKGGYEIFIDTIDGRKITDIIPPGPEIIVSEGEFVKVDQPLTNNPNVGGFGQANTEIVLQNPLRMEGLILFFISVILAQVFLVLKKKQFEKVQIAEMNF.

The N-terminal stretch at 1–35 (MQNTNTLNWINKLIYLSISIPIFFLILVTTYPNSV) is a signal peptide. Tyrosine 38, cysteine 58, cysteine 61, and histidine 62 together coordinate heme. Residues 287-307 (MEGLILFFISVILAQVFLVLK) traverse the membrane as a helical segment.

Belongs to the cytochrome f family. As to quaternary structure, the 4 large subunits of the cytochrome b6-f complex are cytochrome b6, subunit IV (17 kDa polypeptide, petD), cytochrome f and the Rieske protein, while the 4 small subunits are PetG, PetL, PetM and PetN. The complex functions as a dimer. Heme serves as cofactor.

The protein resides in the plastid. It localises to the chloroplast thylakoid membrane. Its function is as follows. Component of the cytochrome b6-f complex, which mediates electron transfer between photosystem II (PSII) and photosystem I (PSI), cyclic electron flow around PSI, and state transitions. The polypeptide is Cytochrome f (Chara vulgaris (Common stonewort)).